The chain runs to 252 residues: Geranylgeranylglyceryl phosphate synthase (252 aa).

Asp-22 and Ser-51 together coordinate Mg(2+). Residues 170–176 (YFEAGSG), 201–202 (GG), and 223–224 (GS) each bind sn-glycerol 1-phosphate.

The protein belongs to the GGGP/HepGP synthase family. Group II subfamily. It depends on Mg(2+) as a cofactor.

It localises to the cytoplasm. The enzyme catalyses sn-glycerol 1-phosphate + (2E,6E,10E)-geranylgeranyl diphosphate = sn-3-O-(geranylgeranyl)glycerol 1-phosphate + diphosphate. It participates in membrane lipid metabolism; glycerophospholipid metabolism. In terms of biological role, prenyltransferase that catalyzes the transfer of the geranylgeranyl moiety of geranylgeranyl diphosphate (GGPP) to the C3 hydroxyl of sn-glycerol-1-phosphate (G1P). This reaction is the first ether-bond-formation step in the biosynthesis of archaeal membrane lipids. This chain is Geranylgeranylglyceryl phosphate synthase, found in Thermoplasma volcanium (strain ATCC 51530 / DSM 4299 / JCM 9571 / NBRC 15438 / GSS1).